The chain runs to 339 residues: Phosphate acyltransferase (339 aa).

It belongs to the PlsX family. Homodimer. Probably interacts with PlsY.

The protein localises to the cytoplasm. It catalyses the reaction a fatty acyl-[ACP] + phosphate = an acyl phosphate + holo-[ACP]. Its pathway is lipid metabolism; phospholipid metabolism. In terms of biological role, catalyzes the reversible formation of acyl-phosphate (acyl-PO(4)) from acyl-[acyl-carrier-protein] (acyl-ACP). This enzyme utilizes acyl-ACP as fatty acyl donor, but not acyl-CoA. The protein is Phosphate acyltransferase of Helicobacter acinonychis (strain Sheeba).